A 360-amino-acid polypeptide reads, in one-letter code: Phospho-N-acetylmuramoyl-pentapeptide-transferase (360 aa).

The next 10 membrane-spanning stretches (helical) occupy residues 26-46, 72-92, 94-114, 132-152, 168-188, 199-219, 236-256, 263-283, 288-308, and 338-358; these read AIVSLLTALFISLWMGPRMIA, PTMGGIMILTAITVSVLLWAY, SNPYVWCVLTVLIGYGIIGFV, WKYFWMSVIALGVAFALYLAG, VMPQLGLLYILLAYFVIVGTG, GLAIMPTVFVAAGFALVAWAT, AGELVIVCTAIVGAGLGFLWF, VFMGDVGSLALGGALGIIAVL, FLLVIMGGVFVVETLSVILQV, and VIVRFWIISLMLVLIGLATLK.

It belongs to the glycosyltransferase 4 family. MraY subfamily. The cofactor is Mg(2+).

Its subcellular location is the cell inner membrane. It carries out the reaction UDP-N-acetyl-alpha-D-muramoyl-L-alanyl-gamma-D-glutamyl-meso-2,6-diaminopimeloyl-D-alanyl-D-alanine + di-trans,octa-cis-undecaprenyl phosphate = di-trans,octa-cis-undecaprenyl diphospho-N-acetyl-alpha-D-muramoyl-L-alanyl-D-glutamyl-meso-2,6-diaminopimeloyl-D-alanyl-D-alanine + UMP. It participates in cell wall biogenesis; peptidoglycan biosynthesis. In terms of biological role, catalyzes the initial step of the lipid cycle reactions in the biosynthesis of the cell wall peptidoglycan: transfers peptidoglycan precursor phospho-MurNAc-pentapeptide from UDP-MurNAc-pentapeptide onto the lipid carrier undecaprenyl phosphate, yielding undecaprenyl-pyrophosphoryl-MurNAc-pentapeptide, known as lipid I. The protein is Phospho-N-acetylmuramoyl-pentapeptide-transferase of Klebsiella pneumoniae (strain 342).